A 125-amino-acid polypeptide reads, in one-letter code: Small ribosomal subunit protein eS6 (125 aa).

It belongs to the eukaryotic ribosomal protein eS6 family.

The protein is Small ribosomal subunit protein eS6 of Pyrococcus abyssi (strain GE5 / Orsay).